A 603-amino-acid chain; its full sequence is NADH-ubiquinone oxidoreductase chain 5 (603 aa).

Helical transmembrane passes span 4–24, 38–58, 87–107, 122–142, 144–160, 171–191, 211–233, 241–261, 272–292, 301–320, 325–347, 370–390, 407–429, 457–477, 482–502, and 583–603; these read YTTM…TTLI, SIIA…MCLD, MTFI…SLWY, LIFL…QLFI, WEGV…WWYA, AILY…WFLL, TPLL…HPWL, TPVS…FLLI, LIQT…AICA, IVAF…IGIN, AFLH…GSII, STSL…TGFY, WALS…MILL, LTIG…PMST, IPLY…LTAL, and MIKL…LLIM.

This sequence belongs to the complex I subunit 5 family. In terms of assembly, core subunit of respiratory chain NADH dehydrogenase (Complex I) which is composed of 45 different subunits.

The protein localises to the mitochondrion inner membrane. It catalyses the reaction a ubiquinone + NADH + 5 H(+)(in) = a ubiquinol + NAD(+) + 4 H(+)(out). Its function is as follows. Core subunit of the mitochondrial membrane respiratory chain NADH dehydrogenase (Complex I) which catalyzes electron transfer from NADH through the respiratory chain, using ubiquinone as an electron acceptor. Essential for the catalytic activity and assembly of complex I. The polypeptide is NADH-ubiquinone oxidoreductase chain 5 (MT-ND5) (Pan paniscus (Pygmy chimpanzee)).